The chain runs to 201 residues: Recombination protein RecR (201 aa).

The C4-type zinc-finger motif lies at 57–72; sequence CADCRTFTEQEVCNIC. Residues 81–176 form the Toprim domain; it reads GQICVVESPA…DASRIAHGVP (96 aa).

It belongs to the RecR family.

Functionally, may play a role in DNA repair. It seems to be involved in an RecBC-independent recombinational process of DNA repair. It may act with RecF and RecO. In Klebsiella pneumoniae subsp. pneumoniae (strain ATCC 700721 / MGH 78578), this protein is Recombination protein RecR.